We begin with the raw amino-acid sequence, 850 residues long: Transforming growth factor beta receptor type 3 (850 aa).

Positions Met1–Ala22 are cleaved as a signal peptide. Residues Gly23–Thr785 lie on the Extracellular side of the membrane. A disulfide bridge connects residues Cys54 and Cys199. Residues Asn143 and Asn491 are each glycosylated (N-linked (GlcNAc...) asparagine). In terms of domain architecture, ZP spans Lys454 to Cys728. The segment at Ser528–Glu557 is disordered. O-linked (Xyl...) (glycosaminoglycan) serine glycosylation is found at Ser533 and Ser544. Asn570, Asn589, and Asn696 each carry an N-linked (GlcNAc...) asparagine glycan. 3 disulfide bridges follow: Cys638–Cys704, Cys659–Cys728, and Cys709–Cys721. Positions Met735–Pro749 are interaction with TGF-beta ligand. The chain crosses the membrane as a helical span at residues Val786–Tyr808. At Ser809–Ala850 the chain is on the cytoplasmic side. Residues Arg817–Ala833 are compositionally biased toward polar residues. Positions Arg817–Ala850 are disordered. Residues Ser835–Ala850 are compositionally biased toward low complexity. A Phosphothreonine modification is found at Thr839.

As to quaternary structure, forms homodimers and homooligomers. Interacts with DYNLT4. Interacts with integrin ITGA5:ITGB1; this interaction promotes the internalization and trafficking of ITGA5:ITGB1 into endocytic vesicles. Interacts with TGFB1, BMP2, BMP5, BMP7 or GDF5 and inhibin A via the ligand binding domains. Interacts with ALK3/BMPR1A; this interaction results in the cell surface retention of BMPR1A. Interacts with ALK6/BMPR1B; this interaction enhances BMPR1B-mediated stimulation of the BMP signaling pathway. Interacts with the scaffolding protein beta-arrestin2/ARRB2; this interaction mediates internalization of TGFBR3 and thus regulates migration, actin cytoskeleton and activation of CDC42. Post-translationally, extensively modified by glycosaminoglycan groups (GAG). In terms of processing, phosphorylated in the cytoplasmic domain by the type II receptor TGFBR2 at THR-839 to mediate recruitment of ARRB2 and subsequent internalization of TGFBR2 and TGFBR3.

Its subcellular location is the cell membrane. The protein resides in the secreted. It localises to the extracellular space. The protein localises to the extracellular matrix. Cell surface receptor that regulates diverse cellular processes including cell proliferation, differentiation, migration, and apoptosis. Initiates BMP, inhibin, and TGF-beta signaling pathways by interacting with different ligands including TGFB1, BMP2, BMP5, BMP7 or GDF5. Alternatively, acts as a cell surface coreceptor for BMP ligands, serving to enhance ligand binding by differentially regulating BMPR1A/ALK3 and BMPR1B/ALK6 receptor trafficking. Promotes epithelial cell adhesion, focal adhesion formation and integrin signaling during epithelial cell spreading on fibronectin. By interacting with the scaffolding protein beta-arrestin2/ARRB2, regulates migration or actin cytoskeleton and promotes the activation of CDC42 as well as the inhibition of NF-kappa-B. In gonadotrope cells, acts as an inhibin A coreceptor and regulates follicle-stimulating hormone (FSH) levels and female fertility. Plays a role in the inhibition of directed and random cell migration in epithelial cells by altering the actin cytoskeletal organization. Participates in epithelial-mesenchymal transformation (EMT) upon binding to BMP2 or TGFB2, by activating the PAR6/SMURF1/RHOA pathway. This is Transforming growth factor beta receptor type 3 (Tgfbr3) from Mus musculus (Mouse).